Consider the following 920-residue polypeptide: Disintegrin and metalloproteinase domain-containing protein 19 (920 aa).

The first 26 residues, 1–26, serve as a signal peptide directing secretion; it reads MPGRAGVARFCLLALALQLHWPLAAC. Positions 27–204 are excised as a propeptide; the sequence is EPGWTTRGSQ…TKKQPRRMKR (178 aa). The Extracellular portion of the chain corresponds to 27–703; it reads EPGWTTRGSQ…VDSGPLPPKS (677 aa). Residues 131-138 carry the Cysteine switch motif; sequence STCRGIRG. Residue Cys133 coordinates Zn(2+). The N-linked (GlcNAc...) asparagine glycan is linked to Asn145. The Peptidase M12B domain maps to 211 to 409; the sequence is KYVELYLVAD…GGGMCLSNMP (199 aa). 3 disulfides stabilise this stretch: Cys321/Cys404, Cys361/Cys388, and Cys362/Cys371. Position 346 (His346) interacts with Zn(2+). Glu347 is a catalytic residue. Zn(2+)-binding residues include His350 and His356. A Disintegrin domain is found at 417–503; the sequence is GRRCGNGYLE…HCPTNYYQMD (87 aa). N-linked (GlcNAc...) asparagine glycans are attached at residues Asn445 and Asn448. The cysteines at positions 475 and 495 are disulfide-linked. Asn649 is a glycosylation site (N-linked (GlcNAc...) asparagine). Residues 654 to 686 form the EGF-like domain; sequence ETEGCGKKCNGHGVCNNNKNCHCFPGWSPPFCN. Disulfide bonds link Cys658–Cys668, Cys662–Cys674, and Cys676–Cys685. The helical transmembrane segment at 704-724 threads the bilayer; sequence VGPVIAGVFSALFVLAVLVLL. The Cytoplasmic portion of the chain corresponds to 725-920; that stretch reads CHCYRQSHKL…RVGAIISSKI (196 aa). The segment at 755–920 is disordered; that stretch reads SQSGGTGHAN…RVGAIISSKI (166 aa). A compositionally biased stretch (polar residues) spans 767-783; that stretch reads FKLQTPQGKRKVTNTPE. Residues 825-834 are compositionally biased toward basic and acidic residues; that stretch reads ARIERKESAR. Residues 835–846 carry the SH3-binding motif; the sequence is RPPPSRPMPPAP. 2 stretches are compositionally biased toward pro residues: residues 835–846 and 888–903; these read RPPPSRPMPPAP and TSGP…PVPK.

As to quaternary structure, interacts with SH3PXD2A. Requires Zn(2+) as cofactor. In terms of processing, the precursor is cleaved by a furin endopeptidase. As to expression, widely expressed, with the highest expression in bone, heart and lung, followed by brain and spleen and relatively low expression in liver, skeletal muscle, kidney and testis. In bone, primarily expressed in cell of the osteoblast lineage and not detected in mature osteoclasts.

It is found in the membrane. Its function is as follows. Participates in the proteolytic processing of beta-type neuregulin isoforms which are involved in neurogenesis and synaptogenesis, suggesting a regulatory role in glial cell. Also cleaves alpha-2 macroglobulin. May be involved in osteoblast differentiation and/or osteoblast activity in bone. This Mus musculus (Mouse) protein is Disintegrin and metalloproteinase domain-containing protein 19 (Adam19).